Consider the following 323-residue polypeptide: Large ribosomal subunit protein uL10 (323 aa).

Residues 296-323 (AAPAAPSAAAKEEPEESDEDDFGMGGLF) are disordered. The span at 308 to 317 (EPEESDEDDF) shows a compositional bias: acidic residues.

The protein belongs to the universal ribosomal protein uL10 family. In terms of assembly, P0 forms a pentameric complex by interaction with dimers of P1 and P2. Phosphorylated.

Ribosomal protein P0 is the functional equivalent of E.coli protein L10. This chain is Large ribosomal subunit protein uL10 (LIPO-A), found in Leishmania infantum.